Here is a 156-residue protein sequence, read N- to C-terminus: Protein US1 (156 aa).

2 disordered regions span residues 90-114 and 133-156; these read RSRSRTAESGRSSSSSSVSVLSDGD and ARRWTQRHDSEERASQQAKNDSTS. A compositionally biased stretch (low complexity) spans 96 to 111; it reads AESGRSSSSSSVSVLS. Polar residues predominate over residues 147–156; it reads SQQAKNDSTS.

In Homo sapiens (Human), this protein is Protein US1 (US1).